The following is a 476-amino-acid chain: Stromelysin-2 (476 aa).

A signal peptide spans 1 to 17; that stretch reads MEPLAILALLSLPICSA. The propeptide at 18 to 99 is activation peptide; that stretch reads YPLHGAVTQG…PRCGVPDVGG (82 aa). Positions 90–97 match the Cysteine switch motif; it reads PRCGVPDV. Zn(2+)-binding residues include cysteine 92, histidine 168, aspartate 170, histidine 183, histidine 196, and histidine 218. Glutamate 219 is a catalytic residue. Residues histidine 222 and histidine 228 each contribute to the Zn(2+) site. Hemopexin repeat units follow at residues 286–335, 336–382, 384–432, and 433–476; these read PDKC…WPTL, PSDL…GFPP, VKKI…FPGI, and EPQV…WLLC. Residues cysteine 289 and cysteine 476 are joined by a disulfide bond.

This sequence belongs to the peptidase M10A family. Zn(2+) serves as cofactor. It depends on Ca(2+) as a cofactor. Expressed in small intestine. Weak levels in heart and lung.

It localises to the secreted. It is found in the extracellular space. The protein localises to the extracellular matrix. The enzyme catalyses Similar to stromelysin 1, but action on collagen types III, IV and V is weak.. In terms of biological role, can degrade fibronectin, gelatins of type I, III, IV, and V; weakly collagens III, IV, and V. Activates procollagenase. In Mus musculus (Mouse), this protein is Stromelysin-2 (Mmp10).